Here is a 425-residue protein sequence, read N- to C-terminus: Septin-11 (425 aa).

The residue at position 2 (Ala2) is an N-acetylalanine. Ser9 carries the post-translational modification Phosphoserine. The region spanning 38-304 is the Septin-type G domain; that stretch reads QGFCFNILCV…ELYRRCKLEE (267 aa). The segment at 48–55 is G1 motif; that stretch reads GETGIGKS. Residues 48–55, Gly103, 184–192, Gly238, and Arg253 contribute to the GTP site; these read GETGIGKS and KADTIAKNE. The tract at residues 100 to 103 is G3 motif; sequence DTVG. Positions 183-186 are G4 motif; that stretch reads AKAD. Residues 320–410 are a coiled coil; sequence QETYEAKRNE…AAQLLQSQAQ (91 aa). The tract at residues 399 to 425 is disordered; that stretch reads KAAAQLLQSQAQQSGAQQTKKDKDKKN. Residues 401–416 show a composition bias toward low complexity; that stretch reads AAQLLQSQAQQSGAQQ.

It belongs to the TRAFAC class TrmE-Era-EngA-EngB-Septin-like GTPase superfamily. Septin GTPase family. Septins polymerize into heterooligomeric protein complexes that form filaments, and can associate with cellular membranes, actin filaments and microtubules. Forms homooligomers. GTPase activity is required for filament formation. Interacts with SEPTIN7, SEPTIN9 and SEPTIN12.

It localises to the cytoplasm. The protein resides in the cytoskeleton. The protein localises to the synapse. Its subcellular location is the cell projection. It is found in the dendritic spine. It localises to the axon. In terms of biological role, filament-forming cytoskeletal GTPase. May play a role in cytokinesis (Potential). May play a role in the cytoarchitecture of neurons, including dendritic arborization and dendritic spines, and in GABAergic synaptic connectivity. In Bos taurus (Bovine), this protein is Septin-11.